The sequence spans 446 residues: Histidine--tRNA ligase (446 aa).

Belongs to the class-II aminoacyl-tRNA synthetase family. Homodimer.

The protein localises to the cytoplasm. The catalysed reaction is tRNA(His) + L-histidine + ATP = L-histidyl-tRNA(His) + AMP + diphosphate + H(+). The protein is Histidine--tRNA ligase of Burkholderia pseudomallei (strain 668).